Reading from the N-terminus, the 194-residue chain is CASP-like protein 2D1 (194 aa).

The segment covering 1–16 (MRDNNNNNTREEERSS) has biased composition (basic and acidic residues). The segment at 1 to 26 (MRDNNNNNTREEERSSSSKQQQPQAP) is disordered. The Cytoplasmic segment spans residues 1–30 (MRDNNNNNTREEERSSSSKQQQPQAPMSLK). The chain crosses the membrane as a helical span at residues 31-51 (IIDSCLRLSVVPLSVATIWLT). The Extracellular portion of the chain corresponds to 52–74 (VTNHESNPDYGNLEYNSIMGLKY). A helical transmembrane segment spans residues 75-95 (MVGVSAISAIYALLSTVSSWV). The Cytoplasmic portion of the chain corresponds to 96-110 (TCLVSKAWLFFIPDQ). A helical membrane pass occupies residues 111–133 (VLAYVMTTSVAGATEIVYLLNKG). The Extracellular portion of the chain corresponds to 134–152 (DKIVTWSEMCSSYPHYCSK). A helical membrane pass occupies residues 153-173 (LTIALGLHVFVLFFFLFLSVI). At 174–194 (SAYRAFSPFDPPCDSQTNNDA) the chain is on the cytoplasmic side.

The protein belongs to the Casparian strip membrane proteins (CASP) family. Homodimer and heterodimers.

It localises to the cell membrane. The protein is CASP-like protein 2D1 of Arabidopsis thaliana (Mouse-ear cress).